The sequence spans 437 residues: 26S proteasome regulatory subunit 4 homolog (437 aa).

The segment at 1–47 is disordered; it reads MGQGVSSGQDKKKKKGSNQKPKYEPPVQSKFGRKKRKGGPATAEKLP. A lipid anchor (N-myristoyl glycine) is attached at glycine 2. 223–230 is an ATP binding site; that stretch reads GAPGTGKT. Residues lysine 234, lysine 255, and lysine 290 each participate in a glycyl lysine isopeptide (Lys-Gly) (interchain with G-Cter in ubiquitin) cross-link.

This sequence belongs to the AAA ATPase family.

The protein resides in the cytoplasm. Its subcellular location is the nucleus. Its function is as follows. The 26S proteasome is involved in the ATP-dependent degradation of ubiquitinated proteins. The regulatory (or ATPase) complex confers ATP dependency and substrate specificity to the 26S complex. Has ATPase activity. This chain is 26S proteasome regulatory subunit 4 homolog (RPT2), found in Saccharomyces cerevisiae (strain ATCC 204508 / S288c) (Baker's yeast).